We begin with the raw amino-acid sequence, 341 residues long: Ectoine-binding periplasmic protein TeaA (341 aa).

Positions 1–25 are cleaved as a signal peptide; sequence MKAYKLLTTASIGALMLGMSTAAYS. L-ectoine-binding residues include Glu34, Arg169, Asn209, Trp213, and Phe234.

It belongs to the bacterial solute-binding protein 7 family. In terms of assembly, monomer. The complex comprises the extracytoplasmic solute receptor protein TeaA, and the two transmembrane proteins TeaB and TeaC.

It localises to the periplasm. Functionally, part of the tripartite ATP-independent periplasmic (TRAP) transport system TeaABC involved in the uptake of ectoine and hydroxyectoine in response to osmotic upshock. Probably functions as a recovery system for synthesized ectoine that leaks out of the cell. Binds ectoine with high affinity. Affinity for hydroxyectoine is approximately 20-fold lower. This is Ectoine-binding periplasmic protein TeaA (teaA) from Halomonas elongata (strain ATCC 33173 / DSM 2581 / NBRC 15536 / NCIMB 2198 / 1H9).